Consider the following 104-residue polypeptide: Flagellar hook-basal body complex protein FliE (104 aa).

It belongs to the FliE family.

Its subcellular location is the bacterial flagellum basal body. The sequence is that of Flagellar hook-basal body complex protein FliE from Enterobacter sp. (strain 638).